The following is a 289-amino-acid chain: Putative transmembrane protein ORF289 (289 aa).

Topologically, residues 1 to 152 are extracellular; the sequence is MAIAKEFLLT…QYTSVVTFRT (152 aa). A helical membrane pass occupies residues 153 to 173; it reads LVAPILYFFALFLVPAWSTVL. Residues 174–234 are Cytoplasmic-facing; it reads KQNPTFPQSQ…NGEVTSTQVN (61 aa). A helical membrane pass occupies residues 235-255; the sequence is APIFIGVTTPSGVLVLAYNYY. The Extracellular segment spans residues 256-289; sequence SGTISKYVSLTVTTTYGSATVINQFETKTTGGTT.

The protein resides in the host membrane. This is Putative transmembrane protein ORF289 from Acidianus sp. F28 (AFV-2).